The chain runs to 182 residues: MEQGKGLAGLFLVISLLQGTMAQQKEEKHLVKVDDSQGDGSVLLTCDFNEKTITWLKDGHRISPPNATKSTWNLGNGAKDPRGMYQCRGAKKKSQLLQVYYRLCENCIELNMGTVSGFIFAEIISIFFLAVGVYFIAGQDGVRQSRASDKQTLLQNEQVYQPLKDREYEQYSRLQGNQVRKK.

The N-terminal stretch at 1-22 (MEQGKGLAGLFLVISLLQGTMA) is a signal peptide. The Extracellular segment spans residues 23 to 116 (QQKEEKHLVK…CIELNMGTVS (94 aa)). The region spanning 37 to 94 (QGDGSVLLTCDFNEKTITWLKDGHRISPPNATKSTWNLGNGAKDPRGMYQCRGAKKKS) is the Ig-like domain. Cysteine 46 and cysteine 87 are disulfide-bonded. Asparagine 66 carries an N-linked (GlcNAc...) asparagine glycan. A helical transmembrane segment spans residues 117–137 (GFIFAEIISIFFLAVGVYFIA). Residues 138–182 (GQDGVRQSRASDKQTLLQNEQVYQPLKDREYEQYSRLQGNQVRKK) lie on the Cytoplasmic side of the membrane. At serine 145 the chain carries Phosphoserine. Serine 148 bears the Phosphoserine; by PKC mark. One can recognise an ITAM domain in the interval 149–177 (DKQTLLQNEQVYQPLKDREYEQYSRLQGN). The short motif at 153–154 (LL) is the Di-leucine motif element.

In terms of assembly, the TCR-CD3 complex is composed of a CD3D/CD3E and a CD3G/CD3E heterodimers that preferentially associate with TCRalpha and TCRbeta, respectively, to form TCRalpha/CD3E/CD3G and TCRbeta/CD3G/CD3E trimers. In turn, the hexamer interacts with CD3Z homodimer to form the TCR-CD3 complex. Alternatively, TCRalpha and TCRbeta can be replaced by TCRgamma and TCRdelta. Phosphorylated on Tyr residues after T-cell receptor triggering by LCK in association with CD4/CD8. Phosphorylated also by PKC; leading to the TCR complex down-regulation. In terms of processing, phosphorylated on Tyr residues after T-cell receptor triggering by LCK in association with CD4/CD8.

The protein localises to the cell membrane. Its function is as follows. Part of the TCR-CD3 complex present on T-lymphocyte cell surface that plays an essential role in adaptive immune response. When antigen presenting cells (APCs) activate T-cell receptor (TCR), TCR-mediated signals are transmitted across the cell membrane by the CD3 chains CD3D, CD3E, CD3G and CD3Z. All CD3 chains contain immunoreceptor tyrosine-based activation motifs (ITAMs) in their cytoplasmic domain. Upon TCR engagement, these motifs become phosphorylated by Src family protein tyrosine kinases LCK and FYN, resulting in the activation of downstream signaling pathways. In addition to this role of signal transduction in T-cell activation, CD3G plays an essential role in the dynamic regulation of TCR expression at the cell surface. Indeed, constitutive TCR cycling is dependent on the di-leucine-based (diL) receptor-sorting motif present in CD3G. In Rattus norvegicus (Rat), this protein is T-cell surface glycoprotein CD3 gamma chain (Cd3g).